The sequence spans 270 residues: Tryptophan synthase alpha chain (270 aa).

Catalysis depends on proton acceptor residues Glu49 and Asp60.

Belongs to the TrpA family. Tetramer of two alpha and two beta chains.

It catalyses the reaction (1S,2R)-1-C-(indol-3-yl)glycerol 3-phosphate + L-serine = D-glyceraldehyde 3-phosphate + L-tryptophan + H2O. Its pathway is amino-acid biosynthesis; L-tryptophan biosynthesis; L-tryptophan from chorismate: step 5/5. Its function is as follows. The alpha subunit is responsible for the aldol cleavage of indoleglycerol phosphate to indole and glyceraldehyde 3-phosphate. This is Tryptophan synthase alpha chain from Pseudomonas syringae pv. tomato (strain ATCC BAA-871 / DC3000).